A 390-amino-acid polypeptide reads, in one-letter code: Probable protein phosphatase 2C 30 (390 aa).

Over residues 1 to 10 (MQLSKNPIKQ) the composition is skewed to polar residues. 2 disordered regions span residues 1-20 (MQLS…NYTD) and 40-85 (PPLV…DSET). Positions 44–61 (FSPTSVKTPLSSPRSSPP) are enriched in low complexity. Residues 128–385 (YYSVYCKRGR…DDISLIIIQL (258 aa)) enclose the PPM-type phosphatase domain. Mn(2+)-binding residues include aspartate 166, glycine 167, aspartate 331, and aspartate 376.

It belongs to the PP2C family. Mg(2+) serves as cofactor. The cofactor is Mn(2+).

It carries out the reaction O-phospho-L-seryl-[protein] + H2O = L-seryl-[protein] + phosphate. The catalysed reaction is O-phospho-L-threonyl-[protein] + H2O = L-threonyl-[protein] + phosphate. In Arabidopsis thaliana (Mouse-ear cress), this protein is Probable protein phosphatase 2C 30 (PP2C5).